We begin with the raw amino-acid sequence, 166 residues long: Large ribosomal subunit protein uL10 (166 aa).

It belongs to the universal ribosomal protein uL10 family. As to quaternary structure, part of the ribosomal stalk of the 50S ribosomal subunit. The N-terminus interacts with L11 and the large rRNA to form the base of the stalk. The C-terminus forms an elongated spine to which L12 dimers bind in a sequential fashion forming a multimeric L10(L12)X complex.

Functionally, forms part of the ribosomal stalk, playing a central role in the interaction of the ribosome with GTP-bound translation factors. This is Large ribosomal subunit protein uL10 from Staphylococcus aureus (strain JH1).